A 398-amino-acid polypeptide reads, in one-letter code: Ubiquitin-like modifier-activating enzyme 5 (398 aa).

5 residues coordinate ATP: glycine 76, aspartate 97, lysine 120, asparagine 143, and asparagine 177. Cysteine 219 and cysteine 222 together coordinate Zn(2+). The active-site Glycyl thioester intermediate is cysteine 243. Residues cysteine 296 and cysteine 301 each coordinate Zn(2+).

The protein belongs to the ubiquitin-activating E1 family. UBA5 subfamily.

In terms of biological role, E1-like enzyme which activates UFM1. This Drosophila grimshawi (Hawaiian fruit fly) protein is Ubiquitin-like modifier-activating enzyme 5.